Here is a 524-residue protein sequence, read N- to C-terminus: Bifunctional purine biosynthesis protein PurH (524 aa).

An MGS-like domain is found at 1-144; it reads MTRRALVSVS…KNSAHVGVVV (144 aa).

It belongs to the PurH family.

The catalysed reaction is (6R)-10-formyltetrahydrofolate + 5-amino-1-(5-phospho-beta-D-ribosyl)imidazole-4-carboxamide = 5-formamido-1-(5-phospho-D-ribosyl)imidazole-4-carboxamide + (6S)-5,6,7,8-tetrahydrofolate. It carries out the reaction IMP + H2O = 5-formamido-1-(5-phospho-D-ribosyl)imidazole-4-carboxamide. It functions in the pathway purine metabolism; IMP biosynthesis via de novo pathway; 5-formamido-1-(5-phospho-D-ribosyl)imidazole-4-carboxamide from 5-amino-1-(5-phospho-D-ribosyl)imidazole-4-carboxamide (10-formyl THF route): step 1/1. Its pathway is purine metabolism; IMP biosynthesis via de novo pathway; IMP from 5-formamido-1-(5-phospho-D-ribosyl)imidazole-4-carboxamide: step 1/1. This chain is Bifunctional purine biosynthesis protein PurH, found in Anaeromyxobacter dehalogenans (strain 2CP-C).